The following is a 45-amino-acid chain: uncharacterized protein (45 aa).

Residues 2 to 25 (YQCLRCGGIFNKRREVVEHLLVGH) form a C2H2-type zinc finger.

This is an uncharacterized protein from Sulfolobus spindle-shape virus 1 (SSV1).